Consider the following 599-residue polypeptide: Elongation factor 4 (599 aa).

One can recognise a tr-type G domain in the interval 2–184; sequence KNIRNFSIIA…RLVRDIPPPQ (183 aa). GTP is bound by residues 14–19 and 131–134; these read DHGKST and NKID.

Belongs to the TRAFAC class translation factor GTPase superfamily. Classic translation factor GTPase family. LepA subfamily.

Its subcellular location is the cell inner membrane. It carries out the reaction GTP + H2O = GDP + phosphate + H(+). Functionally, required for accurate and efficient protein synthesis under certain stress conditions. May act as a fidelity factor of the translation reaction, by catalyzing a one-codon backward translocation of tRNAs on improperly translocated ribosomes. Back-translocation proceeds from a post-translocation (POST) complex to a pre-translocation (PRE) complex, thus giving elongation factor G a second chance to translocate the tRNAs correctly. Binds to ribosomes in a GTP-dependent manner. This chain is Elongation factor 4, found in Salmonella paratyphi C (strain RKS4594).